The primary structure comprises 218 residues: Thiopurine S-methyltransferase (218 aa).

S-adenosyl-L-methionine-binding residues include Trp11, Leu46, Glu67, and Arg122.

This sequence belongs to the class I-like SAM-binding methyltransferase superfamily. TPMT family.

Its subcellular location is the cytoplasm. The catalysed reaction is S-adenosyl-L-methionine + a thiopurine = S-adenosyl-L-homocysteine + a thiopurine S-methylether.. This Vibrio cholerae serotype O1 (strain ATCC 39315 / El Tor Inaba N16961) protein is Thiopurine S-methyltransferase.